Consider the following 86-residue polypeptide: NAD(P)H-quinone oxidoreductase subunit O (86 aa).

This sequence belongs to the complex I NdhO subunit family. As to quaternary structure, NDH-1 can be composed of about 15 different subunits; different subcomplexes with different compositions have been identified which probably have different functions.

The protein localises to the cellular thylakoid membrane. It carries out the reaction a plastoquinone + NADH + (n+1) H(+)(in) = a plastoquinol + NAD(+) + n H(+)(out). The enzyme catalyses a plastoquinone + NADPH + (n+1) H(+)(in) = a plastoquinol + NADP(+) + n H(+)(out). Its function is as follows. NDH-1 shuttles electrons from an unknown electron donor, via FMN and iron-sulfur (Fe-S) centers, to quinones in the respiratory and/or the photosynthetic chain. The immediate electron acceptor for the enzyme in this species is believed to be plastoquinone. Couples the redox reaction to proton translocation, and thus conserves the redox energy in a proton gradient. Cyanobacterial NDH-1 also plays a role in inorganic carbon-concentration. In Prochlorococcus marinus (strain SARG / CCMP1375 / SS120), this protein is NAD(P)H-quinone oxidoreductase subunit O.